Here is a 336-residue protein sequence, read N- to C-terminus: D-alanine--D-alanine ligase (336 aa).

One can recognise an ATP-grasp domain in the interval 124 to 330 (KMWFSALGIP…FTEYLSLVIN (207 aa)). Position 154-209 (154-209 (ALENWGSIFVKAASQGSSVGCYKVDDSSKVADVLKDAFGYAPYVIVEKTIKARELE)) interacts with ATP. Aspartate 284, glutamate 297, and asparagine 299 together coordinate Mg(2+).

This sequence belongs to the D-alanine--D-alanine ligase family. Mg(2+) serves as cofactor. The cofactor is Mn(2+).

The protein resides in the cytoplasm. It carries out the reaction 2 D-alanine + ATP = D-alanyl-D-alanine + ADP + phosphate + H(+). It participates in cell wall biogenesis; peptidoglycan biosynthesis. Its function is as follows. Cell wall formation. This is D-alanine--D-alanine ligase from Shewanella sp. (strain ANA-3).